A 727-amino-acid chain; its full sequence is Ubiquitin carboxyl-terminal hydrolase BAP1 (727 aa).

The UCH catalytic domain maps to 4–235 (GWLELESDPG…IRFNLMAVVP (232 aa)). The Arg-finger motif motif lies at 56–60 (RRSRR). Catalysis depends on Cys-91, which acts as the Nucleophile. His-169 (proton donor) is an active-site residue. The segment at 273–351 (THKSQESQLP…SLNGVPPTPT (79 aa)) is disordered. At Ser-292 the chain carries Phosphoserine. A compositionally biased stretch (polar residues) spans 320-330 (CPQTTTHSPPS). The HBM-like motif signature appears at 363–366 (NHNY). 2 positions are modified to phosphoserine: Ser-369 and Ser-394. Disordered stretches follow at residues 372–435 (QEEE…DGQL) and 462–522 (SIKT…SPVT). A compositionally biased stretch (acidic residues) spans 394 to 407 (SDDEEDYEDEEEDV). 2 stretches are compositionally biased toward polar residues: residues 426-435 (SLSNSSDGQL) and 478-522 (THSQ…SPVT). Thr-491 is subject to Phosphothreonine. Residues Ser-519, Ser-535, Ser-583, and Ser-595 each carry the phosphoserine modification. Residues 573–622 (LTEGGKGSSPSTRSSQGSQGSSSLEEKEVVEVTDSRDKSGLNRSSEPLSG) form a disordered region. Low complexity predominate over residues 580-595 (SSPSTRSSQGSQGSSS). The tract at residues 594-719 (SSLEEKEVVE…QRKPDRRKRS (126 aa)) is interaction with BRCA1. A compositionally biased stretch (basic and acidic residues) spans 596-612 (LEEKEVVEVTDSRDKSG). Residues 628-659 (KELLALLKCVEAEIANYEACLKEEVEKRKKFK) adopt a coiled-coil conformation. The interaction with YY1 stretch occupies residues 640 to 684 (EIANYEACLKEEVEKRKKFKIDDQRRTHNYDEFICTFISMLAQEG). Positions 668–696 (NYDEFICTFISMLAQEGMLANLVEQNISV) constitute a ULD domain. An interaction with nucleosomal DNA forming a DNA clamp with ASXL1 region spans residues 697–699 (RRR). The Classical bipartite Nuclear localization signal (NLS) motif lies at 697–720 (RRRQGVSIGRLHKQRKPDRRKRSR). The segment at 702–727 (VSIGRLHKQRKPDRRKRSRPYKAKRQ) is disordered. Positions 711 to 727 (RKPDRRKRSRPYKAKRQ) are positively charged C-terminal extension (CTE). A Nuclear localization signal motif is present at residues 715-720 (RRKRSR). Residues 715–722 (RRKRSRPY) carry the Non-classical PY-nuclear localization signal (PY-NLS) motif.

The protein belongs to the peptidase C12 family. BAP1 subfamily. In terms of assembly, core component of the polycomb repressive deubiquitinase (PR-DUB) complex, at least composed of BAP1, one of ASXL1, ASXL2 or (probably) ASXL3, and one of MBD5 or MBD6. The PR-DUB core associates with a number of accessory proteins, including FOXK1, FOXK2, KDM1B, HCFC1, YY1 and OGT; KDM1B specifically associates with ASXL2 PR-DUB complexes. The BAP1 deubiquitinase activity is not required for PR-DUB assembly. Homodimerize (via coiled-coil hinge-region between the UCH and ULD domains) to mediate assembly of 2 copies of the BAP1-ASXL heterodimer into a bisymmetric tetramer; dimerization enhances association with nucleosomes. The PR-DUB complex associates with nucleosomes to mediate deubiquitination of 'lys-120' of histone H2AK118ub1 substrates; the association requires the positively charged C-terminal tail of BAP1. Interacts (via ULD domain) with ASXL1 (via DEUBAD domain); the interaction is direct and forms a ubiquitin binding cleft. The interaction with ASXL1 stabilizes BAP1 but is not required for nucleosome binding. Associates (via C-terminus) with nucleosome and chromatosome complexes through direct interaction with DNA and the histone3/4 dimer; this association displaces the histone-2A C-terminal tail, extending and orienting the H2AK118ub1 substrate towards the BAP1 deubiquitinase active site. Also interacts (via arginine finger) directly with the histone H2A-H2B acidic patch; this interaction is not critical for nucleosome-chromatosome association but may play a role in orienting the H2AK118ub1 substrate towards the PR-DUB complex active site. Interacts with BRCA1 (via the RING finger). Interacts (via HBM-like motif) with HCFC1. Interacts (via a C-terminal region overlapping the ULD domain) with YY1; the interaction is direct and requires the interaction with HCFC1. Interacts (when phosphorylated at Thr-491) with FOXK1. Interacts (when phosphorylated at Thr-491) with FOXK2; leading to recruitment of the PR-DUB complex and repression of FOXK2 target genes. Interacts (via non-classical PY-NLS) with TNPO1/transportin-1 (via HEAT repeats 8-12); the interaction is direct, mediates BAP1 nuclear localization and disrupts BAP1 homodimerization. Interacts (via C-terminus) with KPNA1/importin alpha5 and KPNA2/importin alpha1; these interactions can contribute to BAP1 nuclear localization but are less important than the interaction with TNPO1/transportin-1. The interaction with TNPO1/transportin-1 disrupts homodimerization and blocks ubiquitination by UBE2O. Post-translationally, ubiquitinated: monoubiquitinated at multiple sites within its nuclear localization signal (NLS) BY UBE2O, leading to cytoplasmic retention. Able to mediate autodeubiquitination via intramolecular interactions to counteract cytoplasmic retention. Monoubiquitinated on at least 4 sites near or within its PY-NLS.

It localises to the cytoplasm. It is found in the nucleus. Its subcellular location is the chromosome. It catalyses the reaction Thiol-dependent hydrolysis of ester, thioester, amide, peptide and isopeptide bonds formed by the C-terminal Gly of ubiquitin (a 76-residue protein attached to proteins as an intracellular targeting signal).. Functionally, deubiquitinating enzyme that plays a key role in chromatin by mediating deubiquitination of histone H2A and HCFC1. Catalytic component of the polycomb repressive deubiquitinase (PR-DUB) complex, a complex that specifically mediates deubiquitination of histone H2A monoubiquitinated at 'Lys-120' (H2AK119ub1). Does not deubiquitinate monoubiquitinated histone H2B. The PR-DUB complex is an epigenetic regulator of gene expression and acts as a transcriptional coactivator, affecting genes involved in development, cell communication, signaling, cell proliferation and cell viability. Antagonizes PRC1 mediated H2AK119ub1 monoubiquitination. As part of the PR-DUB complex, associates with chromatin enriched in histone marks H3K4me1, H3K4me3, and H3K27Ac, but not in H3K27me3. Acts as a regulator of cell growth by mediating deubiquitination of HCFC1 N-terminal and C-terminal chains, with some specificity toward 'Lys-48'-linked polyubiquitin chains compared to 'Lys-63'-linked polyubiquitin chains. Deubiquitination of HCFC1 does not lead to increase stability of HCFC1. Interferes with the BRCA1 and BARD1 heterodimer activity by inhibiting their ability to mediate ubiquitination and autoubiquitination. It however does not mediate deubiquitination of BRCA1 and BARD1. Able to mediate autodeubiquitination via intramolecular interactions to counteract monoubiquitination at the nuclear localization signal (NLS), thereby protecting it from cytoplasmic sequestration. Acts as a tumor suppressor. Negatively regulates epithelial-mesenchymal transition (EMT) of trophoblast stem cells during placental development by regulating genes involved in epithelial cell integrity, cell adhesion and cytoskeletal organization. This chain is Ubiquitin carboxyl-terminal hydrolase BAP1 (Bap1), found in Rattus norvegicus (Rat).